A 269-amino-acid polypeptide reads, in one-letter code: 4-hydroxy-tetrahydrodipicolinate reductase (269 aa).

11 to 16 (GPIGRM) provides a ligand contact to NAD(+). NADP(+) is bound at residue K39. Residues 101-103 (GTT) and 125-128 (ASNF) each bind NAD(+). The Proton donor/acceptor role is filled by H158. H159 serves as a coordination point for (S)-2,3,4,5-tetrahydrodipicolinate. K162 serves as the catalytic Proton donor. Residue 168-169 (GT) participates in (S)-2,3,4,5-tetrahydrodipicolinate binding.

Belongs to the DapB family. As to quaternary structure, homotetramer.

It localises to the cytoplasm. It carries out the reaction (S)-2,3,4,5-tetrahydrodipicolinate + NAD(+) + H2O = (2S,4S)-4-hydroxy-2,3,4,5-tetrahydrodipicolinate + NADH + H(+). The catalysed reaction is (S)-2,3,4,5-tetrahydrodipicolinate + NADP(+) + H2O = (2S,4S)-4-hydroxy-2,3,4,5-tetrahydrodipicolinate + NADPH + H(+). It participates in amino-acid biosynthesis; L-lysine biosynthesis via DAP pathway; (S)-tetrahydrodipicolinate from L-aspartate: step 4/4. Catalyzes the conversion of 4-hydroxy-tetrahydrodipicolinate (HTPA) to tetrahydrodipicolinate. The sequence is that of 4-hydroxy-tetrahydrodipicolinate reductase from Buchnera aphidicola subsp. Acyrthosiphon pisum (strain APS) (Acyrthosiphon pisum symbiotic bacterium).